A 1207-amino-acid polypeptide reads, in one-letter code: Disease resistance protein RPP2B (1207 aa).

Residues 15 to 180 (CEFDVFVSFR…EIVKNTFRML (166 aa)) enclose the TIR domain. Residue Glu-89 is part of the active site. The region spanning 201–445 (ELEKLLMFDN…FLDIACFFRS (245 aa)) is the NB-ARC domain. LRR repeat units lie at residues 607 to 630 (PKELVDLSLRYSHIKQLWEDEKNT), 653 to 676 (AKNLERLDLEGCTSLDLLGSVKQM), 677 to 699 (NELIYLNLRDCTSLESLPKGFKI), 720 to 743 (SESIESLHLEGTAIERVVEHIESL), 744 to 767 (HSLILLNLKNCEKLKYLPNDLYKL), 769 to 791 (SLQELVLSGCSALESLPPIKEKM), 792 to 815 (ECLEILLMDGTSIKQTPEMSCLSN), 840 to 862 (NSFLSDLYLTNCNIDKLPDKFSS), and 863 to 886 (LRSLRCLCLSRNNIETLPESIEKL).

The protein belongs to the disease resistance TIR-NB-LRR family.

The enzyme catalyses NAD(+) + H2O = ADP-D-ribose + nicotinamide + H(+). Its function is as follows. Disease resistance protein that cooperates with RPP2A to confer resistance to Hyaloperonospora parasitica isolate Cala2. The protein is Disease resistance protein RPP2B of Arabidopsis thaliana (Mouse-ear cress).